A 614-amino-acid polypeptide reads, in one-letter code: Heat shock protein SSB1 (614 aa).

The segment at 1–392 (MSTEVYDGAI…ILSGKATSAE (392 aa)) is nucleotide binding domain (NBD). Residues 16 to 18 (TTY), Lys-74, 206 to 208 (GGT), 272 to 279 (ERAKRTLS), and Gly-343 each bind ATP. The inter-domain linker stretch occupies residues 393–403 (TADLLLLDVVP). The substrate binding domain (SBD) stretch occupies residues 404–614 (LSLGVAMEGN…RAVTKAMSSR (211 aa)). A lid domain (SBDalpha) region spans residues 517–613 (TSEIENMISE…KRAVTKAMSS (97 aa)). The Nuclear export signal motif lies at 575–583 (IENTMSEAM).

It belongs to the heat shock protein 70 family. Interacts with HAT1 in starvation conditions.

Its subcellular location is the nucleus. It is found in the cytoplasm. It catalyses the reaction ATP + H2O = ADP + phosphate + H(+). Chaperone that interacts with the histone acetyltransferase HAT1 and mediates its translocation from the nucleus to the cytoplasm during germination and starvation conditions. Within the cytoplasm, HAT1 regulates autophagy via acetylation of the autophagy-related proteins ATG3 and ATG9. This chain is Heat shock protein SSB1, found in Pyricularia oryzae (strain 70-15 / ATCC MYA-4617 / FGSC 8958) (Rice blast fungus).